Here is a 514-residue protein sequence, read N- to C-terminus: 2-isopropylmalate synthase (514 aa).

One can recognise a Pyruvate carboxyltransferase domain in the interval 5 to 268; the sequence is LIIFDTTLRD…DVGLDTTQIV (264 aa). Mn(2+) is bound by residues Asp14, His202, His204, and Asn239. The tract at residues 395 to 514 is regulatory domain; the sequence is KFVSLSQRSE…KDDKLNPQRS (120 aa).

The protein belongs to the alpha-IPM synthase/homocitrate synthase family. LeuA type 1 subfamily. Homodimer. The cofactor is Mn(2+).

The protein resides in the cytoplasm. It carries out the reaction 3-methyl-2-oxobutanoate + acetyl-CoA + H2O = (2S)-2-isopropylmalate + CoA + H(+). It participates in amino-acid biosynthesis; L-leucine biosynthesis; L-leucine from 3-methyl-2-oxobutanoate: step 1/4. Functionally, catalyzes the condensation of the acetyl group of acetyl-CoA with 3-methyl-2-oxobutanoate (2-ketoisovalerate) to form 3-carboxy-3-hydroxy-4-methylpentanoate (2-isopropylmalate). This is 2-isopropylmalate synthase from Burkholderia ambifaria (strain MC40-6).